The sequence spans 686 residues: Methionine--tRNA ligase (686 aa).

Residues 15–25 (PYANGPIHLGH) carry the 'HIGH' region motif. Zn(2+) is bound by residues cysteine 146, cysteine 149, cysteine 159, and cysteine 162. The 'KMSKS' region signature appears at 332-336 (KMSKS). Lysine 335 is an ATP binding site. The 102-residue stretch at 585-686 (TFAKTDLRVA…DGAKPGQRIM (102 aa)) folds into the tRNA-binding domain.

Belongs to the class-I aminoacyl-tRNA synthetase family. MetG type 1 subfamily. In terms of assembly, homodimer. It depends on Zn(2+) as a cofactor.

It localises to the cytoplasm. The enzyme catalyses tRNA(Met) + L-methionine + ATP = L-methionyl-tRNA(Met) + AMP + diphosphate. Functionally, is required not only for elongation of protein synthesis but also for the initiation of all mRNA translation through initiator tRNA(fMet) aminoacylation. This Psychromonas ingrahamii (strain DSM 17664 / CCUG 51855 / 37) protein is Methionine--tRNA ligase.